Consider the following 342-residue polypeptide: Glycerol-3-phosphate dehydrogenase [NAD(P)+] (342 aa).

NADPH-binding residues include Trp-11, Arg-33, and Lys-107. Sn-glycerol 3-phosphate contacts are provided by Lys-107, Gly-143, and Ser-145. Residue Ala-147 coordinates NADPH. Sn-glycerol 3-phosphate is bound by residues Lys-198, Asp-251, Ser-261, Arg-262, and Asn-263. Lys-198 functions as the Proton acceptor in the catalytic mechanism. Position 262 (Arg-262) interacts with NADPH. Residues Val-286 and Glu-288 each contribute to the NADPH site.

Belongs to the NAD-dependent glycerol-3-phosphate dehydrogenase family.

The protein resides in the cytoplasm. The enzyme catalyses sn-glycerol 3-phosphate + NAD(+) = dihydroxyacetone phosphate + NADH + H(+). It carries out the reaction sn-glycerol 3-phosphate + NADP(+) = dihydroxyacetone phosphate + NADPH + H(+). It participates in membrane lipid metabolism; glycerophospholipid metabolism. In terms of biological role, catalyzes the reduction of the glycolytic intermediate dihydroxyacetone phosphate (DHAP) to sn-glycerol 3-phosphate (G3P), the key precursor for phospholipid synthesis. In Paracidovorax citrulli (strain AAC00-1) (Acidovorax citrulli), this protein is Glycerol-3-phosphate dehydrogenase [NAD(P)+].